The sequence spans 476 residues: MNVGSILNDEPSPSKKTTNDDSGDSVRPDMSTYQRHSLVNLLNDPAPNNELKTKETKKDWSEDEHSNFRVPVTEPNQQLSPVLRRSSIADITNEKDVDISSSTEHPIEQDKSEKDEDELTRISKLKSTNKPRRYTEPPIWAQEWIPTSYQGTANGTPVVNAQESSLSSKRVFDRSSTVNVDLECSITGVIPPPSVTRTIAEWIYANFTEIPDDQRKYVELELKFGTIIDKRAGHRIDINVSTECIFTDNSNTYFDMGVHEVGWNDMCKFLDDLEKSYQDELRRSPQANSNSPKRKFNILESDITDNFYQITSRNEQPKSIRISKDNLLDPPRYTAINKQRLSSLFIHNPSSMYDLRLSLSYENPIADNNIDGIIKKNQPTLTRIKKRNSWTHRPTVTRFDMTRVLSPRESKNKSGKKIVEQDQSFEVELEVDTLELFNGFDKFKSGADSIRFEELVEIFVNNARCLNNRVTKLANK.

The disordered stretch occupies residues 1 to 133 (MNVGSILNDE…KLKSTNKPRR (133 aa)). 2 stretches are compositionally biased toward basic and acidic residues: residues 51–67 (LKTKETKKDWSEDEHSN) and 105–114 (HPIEQDKSEK). Residues 123–132 (SKLKSTNKPR) are compositionally biased toward basic residues.

It belongs to the fungal TPase family. In terms of assembly, heterodimer. The mRNA-capping enzyme is composed of two separate chains alpha and beta, respectively a mRNA guanylyltransferase and an mRNA 5'-triphosphate monophosphatase. Mg(2+) is required as a cofactor.

It localises to the nucleus. It carries out the reaction a 5'-end triphospho-ribonucleoside in mRNA + H2O = a 5'-end diphospho-ribonucleoside in mRNA + phosphate + H(+). Functionally, first step of mRNA capping. Converts the 5'-triphosphate end of a nascent mRNA chain into a diphosphate end. The sequence is that of mRNA-capping enzyme subunit beta (CET1) from Debaryomyces hansenii (strain ATCC 36239 / CBS 767 / BCRC 21394 / JCM 1990 / NBRC 0083 / IGC 2968) (Yeast).